Here is a 503-residue protein sequence, read N- to C-terminus: SusD-like protein P38 (503 aa).

Residues 1 to 21 form the signal peptide; the sequence is MKKFKNISITFLILISLGVLN.

This sequence belongs to the SusD family.

It is found in the cell outer membrane. In terms of biological role, polysaccharide-binding protein probably involved in ulvan degradation. Ulvan is the main polysaccharide component of the Ulvales (green seaweed) cell wall. It is composed of disaccharide building blocks comprising 3-sulfated rhamnose (Rha3S) linked to D-glucuronic acid (GlcA), L-iduronic acid (IduA), or D-xylose (Xyl). The SusD-like protein may mediate ulvan oligomer-binding before transport in the periplasm for further degradation. The polypeptide is SusD-like protein P38 (Formosa agariphila (strain DSM 15362 / KCTC 12365 / LMG 23005 / KMM 3901 / M-2Alg 35-1)).